A 740-amino-acid chain; its full sequence is Catalase-peroxidase 2 (740 aa).

A signal peptide spans 1 to 27 (MFKKTKPRISILALTISCAIYSGAALA). The segment at residues 106–228 (WHSAGTYRIY…LAAVQMGLIY (123 aa)) is a cross-link (tryptophyl-tyrosyl-methioninium (Trp-Tyr) (with M-254)). Residue His-107 is the Proton acceptor of the active site. The tryptophyl-tyrosyl-methioninium (Tyr-Met) (with W-106) cross-link spans 228 to 254 (YVNPEGPNGVPDPLLAAKDIRDTFGRM). Position 269 (His-269) interacts with heme b.

The protein belongs to the peroxidase family. Peroxidase/catalase subfamily. As to quaternary structure, homodimer or homotetramer. Heme b is required as a cofactor. Formation of the three residue Trp-Tyr-Met cross-link is important for the catalase, but not the peroxidase activity of the enzyme.

The catalysed reaction is H2O2 + AH2 = A + 2 H2O. It carries out the reaction 2 H2O2 = O2 + 2 H2O. In terms of biological role, bifunctional enzyme with both catalase and broad-spectrum peroxidase activity. The chain is Catalase-peroxidase 2 from Cellvibrio japonicus (strain Ueda107) (Pseudomonas fluorescens subsp. cellulosa).